The chain runs to 145 residues: uncharacterized protein (145 aa).

The CBM3 domain occupies 1–145; that stretch reads LQYRAADTNA…NGQIVWGTAP (145 aa).

This is an uncharacterized protein from Paenibacillus lautus (Bacillus lautus).